A 282-amino-acid polypeptide reads, in one-letter code: Bifunctional protein FolD (282 aa).

NADP(+) is bound by residues 164–166 and Ser189; that span reads GRS.

This sequence belongs to the tetrahydrofolate dehydrogenase/cyclohydrolase family. As to quaternary structure, homodimer.

The enzyme catalyses (6R)-5,10-methylene-5,6,7,8-tetrahydrofolate + NADP(+) = (6R)-5,10-methenyltetrahydrofolate + NADPH. It carries out the reaction (6R)-5,10-methenyltetrahydrofolate + H2O = (6R)-10-formyltetrahydrofolate + H(+). It functions in the pathway one-carbon metabolism; tetrahydrofolate interconversion. Its function is as follows. Catalyzes the oxidation of 5,10-methylenetetrahydrofolate to 5,10-methenyltetrahydrofolate and then the hydrolysis of 5,10-methenyltetrahydrofolate to 10-formyltetrahydrofolate. In Anaeromyxobacter dehalogenans (strain 2CP-C), this protein is Bifunctional protein FolD.